The chain runs to 1358 residues: Mediator of RNA polymerase II transcription subunit 12 (1358 aa).

Positions 629–654 (VRYNYEQLQIQLNTAKEQMLQEQFEH) form a coiled coil.

This sequence belongs to the Mediator complex subunit 12 family. In terms of assembly, component of the SRB8-11 complex, which itself associates with the Mediator complex.

Its subcellular location is the nucleus. Functionally, component of the SRB8-11 complex. The SRB8-11 complex is a regulatory module of the Mediator complex which is itself involved in regulation of basal and activated RNA polymerase II-dependent transcription. The SRB8-11 complex may be involved in the transcriptional repression of a subset of genes regulated by Mediator. It may inhibit the association of the Mediator complex with RNA polymerase II to form the holoenzyme complex. The polypeptide is Mediator of RNA polymerase II transcription subunit 12 (SRB8) (Eremothecium gossypii (strain ATCC 10895 / CBS 109.51 / FGSC 9923 / NRRL Y-1056) (Yeast)).